Consider the following 937-residue polypeptide: Putative leucine-rich repeat receptor-like serine/threonine-protein kinase At3g53590 (937 aa).

The signal sequence occupies residues 1–20 (MIPPNINVLIRSICINLVTS). The Extracellular segment spans residues 21–547 (LPLNFAYIFI…LLAQTSGIRT (527 aa)). N-linked (GlcNAc...) asparagine glycans are attached at residues Asn50, Asn63, Asn90, and Asn114. LRR repeat units follow at residues 102-126 (LLYL…IGRI), 127-150 (SSLK…LGNL), 152-173 (NLNR…SFGN), 174-198 (LRSI…LSKL), 200-222 (KLVH…LAQL), 223-249 (PSLT…HFSR), 251-270 (VKLS…LSRI), and 271-294 (ENLS…KLSD). N-linked (GlcNAc...) asparagine glycans are attached at residues Asn162, Asn184, and Asn210. N-linked (GlcNAc...) asparagine glycosylation is found at Asn272 and Asn295. LRR repeat units follow at residues 296-316 (MTTI…SFSD), 317-341 (LNSL…IWQD), and 343-360 (SFEN…NFSD). N-linked (GlcNAc...) asparagine glycosylation is found at Asn327, Asn357, Asn370, Asn413, Asn499, and Asn516. The chain crosses the membrane as a helical span at residues 548 to 568 (IVWMMIVAGSVVAATVLSVTA). Over 569 to 937 (TLLYVRKRRE…SGFFHAVKPR (369 aa)) the chain is Cytoplasmic. Residues 614 to 886 (FDSSTLIGRG…SKVVKELEGI (273 aa)) enclose the Protein kinase domain. Residues 620 to 628 (IGRGSYGKV) and Lys642 each bind ATP. The Proton acceptor role is filled by Asp738.

It belongs to the protein kinase superfamily. Ser/Thr protein kinase family.

It localises to the cell membrane. The enzyme catalyses L-seryl-[protein] + ATP = O-phospho-L-seryl-[protein] + ADP + H(+). It catalyses the reaction L-threonyl-[protein] + ATP = O-phospho-L-threonyl-[protein] + ADP + H(+). In Arabidopsis thaliana (Mouse-ear cress), this protein is Putative leucine-rich repeat receptor-like serine/threonine-protein kinase At3g53590.